The sequence spans 324 residues: Deoxyhypusine hydroxylase (324 aa).

2 HEAT-like PBS-type repeats span residues L60 to D86 and R94 to R119. The Fe cation site is built by H62, E63, H95, and E96. Residues E143 to Q152 are compositionally biased toward basic and acidic residues. Positions E143 to Q171 are disordered. HEAT-like PBS-type repeat units follow at residues K189–G219, F227–N253, and V260–D287. Residues H229, E230, H262, and E263 each contribute to the Fe cation site.

It belongs to the deoxyhypusine hydroxylase family. The cofactor is Fe(2+).

It is found in the cytoplasm. The protein resides in the nucleus. It catalyses the reaction [eIF5A protein]-deoxyhypusine + AH2 + O2 = [eIF5A protein]-hypusine + A + H2O. The protein operates within protein modification; eIF5A hypusination. Functionally, catalyzes the hydroxylation of the N(6)-(4-aminobutyl)-L-lysine intermediate to form hypusine, an essential post-translational modification only found in mature eIF-5A factor. This chain is Deoxyhypusine hydroxylase (lia1), found in Neurospora crassa (strain ATCC 24698 / 74-OR23-1A / CBS 708.71 / DSM 1257 / FGSC 987).